The sequence spans 107 residues: High mobility group protein HMG-I/HMG-Y (107 aa).

The segment covering 1-13 (MSESVSKSSQPLA) has biased composition (polar residues). The interval 1–107 (MSESVSKSSQ…ISQESSEEEQ (107 aa)) is disordered. Residue Ser-2 is modified to N-acetylserine. Residue Lys-7 is modified to N6-acetyllysine. Position 8 is an ADP-ribosylserine (Ser-8). Ser-9 is modified (ADP-ribosylserine; alternate). Ser-9 is modified (phosphoserine; alternate). Lys-15 carries the post-translational modification N6-acetyllysine; alternate. Lys-15 participates in a covalent cross-link: Glycyl lysine isopeptide (Lys-Gly) (interchain with G-Cter in SUMO2); alternate. Over residues 15 to 24 (KQEKDGTEKR) the composition is skewed to basic and acidic residues. A DNA-binding region (a.T hook 1) is located at residues 21–31 (TEKRGRGRPRK). Arg-26 bears the Asymmetric dimethylarginine; alternate mark. Omega-N-methylarginine; alternate is present on Arg-26. A Symmetric dimethylarginine; alternate modification is found at Arg-26. Ser-36 is modified (phosphoserine; by HIPK2 and CDC2). A Phosphothreonine modification is found at Thr-39. 2 positions are modified to phosphoserine: Ser-44 and Ser-49. Position 53 is a phosphothreonine; by HIPK2 and CDC2 (Thr-53). 2 consecutive DNA-binding regions (a.T hook) follow at residues 53–63 (TPKRPRGRPKG) and 78–89 (TPGRKPRGRPKK). Residues 53 to 77 (TPKRPRGRPKGSKNKGTAKTRKVTT) form an interaction with HIPK2 region. Residues 55-74 (KRPRGRPKGSKNKGTAKTRK) are compositionally biased toward basic residues. Residues Arg-58 and Arg-60 each carry the asymmetric dimethylarginine; by PRMT6; alternate modification. Omega-N-methylarginine; by PRMT6; alternate is present on residues Arg-58 and Arg-60. Thr-78 bears the Phosphothreonine; by HIPK2 and CDC2 mark. Residues 93 to 107 (EEEEGISQESSEEEQ) show a composition bias toward acidic residues. A phosphoserine mark is found at Ser-99, Ser-102, and Ser-103.

It belongs to the HMGA family. Interacts with HIPK2. Isoforms HMG-I and HMG-Y can be phosphorylated by HIPK2. Phosphorylation may modulate DNA-binding affinity. Post-translationally, methylation at Arg-58 is mutually exclusive with methylation at Arg-60.

It is found in the nucleus. The protein resides in the chromosome. Functionally, HMG-I/Y bind preferentially to the minor groove of A+T rich regions in double-stranded DNA. It is suggested that these proteins could function in nucleosome phasing and in the 3'-end processing of mRNA transcripts. They are also involved in the transcription regulation of genes containing, or in close proximity to A+T-rich regions. In Rattus norvegicus (Rat), this protein is High mobility group protein HMG-I/HMG-Y (Hmga1).